Reading from the N-terminus, the 679-residue chain is TBC1 domain family member 23 (679 aa).

One can recognise a Rab-GAP TBC domain in the interval 38–219; it reads QLPADLRAKV…AIWDGYLQQA (182 aa). A Rhodanese domain is found at 327-439; it reads EGVRFFVVDC…LQQHLADINV (113 aa). A compositionally biased stretch (low complexity) spans 454–468; that stretch reads SGSRSSINSSVDGDS. The interval 454–478 is disordered; the sequence is SGSRSSINSSVDGDSPNGSSDGKGV.

The protein resides in the golgi apparatus. Its subcellular location is the trans-Golgi network. Functionally, putative Rab GTPase-activating protein which plays a role in vesicular trafficking. Involved in endosome-to-Golgi trafficking. Acts as a bridging protein by binding simultaneously to golgins, located at the trans-Golgi, and to the WASH complex, located on endosome-derived vesicles. Plays a role in brain development. May act as a general inhibitor of innate immunity signaling. The protein is TBC1 domain family member 23 (TBC1D23) of Gallus gallus (Chicken).